A 400-amino-acid polypeptide reads, in one-letter code: Probable peptidoglycan glycosyltransferase FtsW (400 aa).

Over 1–29 (MVIERIKHLASPLQDWVFTPSPKVMFDRQ) the chain is Cytoplasmic. A helical transmembrane segment spans residues 30 to 50 (LIWIALGLMLTGLVMVASASF). The Periplasmic portion of the chain corresponds to 51-60 (PISTRLTGQP). Residues 61-81 (FHFMMRHMLFVFLALSISSIV) form a helical membrane-spanning segment. The Cytoplasmic segment spans residues 82–95 (LRIELNKWLKYSSH). A helical transmembrane segment spans residues 96 to 116 (LLLISLLLLAAVLVVGKSVNG). Topologically, residues 117–122 (AARWLP) are periplasmic. A helical transmembrane segment spans residues 123-143 (LGIFNLQPAEVAKLSLFVFIA). The Cytoplasmic portion of the chain corresponds to 144 to 155 (GYLVRRHGEVRD). A helical membrane pass occupies residues 156–176 (SFRGFVKPLLVLITLAFFLLM). The Periplasmic portion of the chain corresponds to 177-178 (QP). Residues 179-199 (DLGTTVVMFVTTIAMLFIAGA) traverse the membrane as a helical segment. A topological domain (cytoplasmic) is located at residue Lys200. The helical transmembrane segment at 201–221 (LWQFIALVMGGISLVIVLILA) threads the bilayer. The Periplasmic segment spans residues 222-290 (EPYRMRRVTS…VFAVIAEELG (69 aa)). Residues 291-311 (FVGVCLVLCLIFALVFKALLI) form a helical membrane-spanning segment. The Cytoplasmic segment spans residues 312–321 (GRKCLAHDQR). The chain crosses the membrane as a helical span at residues 322–342 (FGGFLAFGIGIWFAFQTLVNV). The Periplasmic segment spans residues 343–356 (GAAAGIVPTKGLTL). A helical transmembrane segment spans residues 357–377 (PLISYGGSSLIIMSVAVSLLI). Over 378 to 400 (RIDHECRVYLANEPPRSENEEQK) the chain is Cytoplasmic.

This sequence belongs to the SEDS family. FtsW subfamily.

It is found in the cell inner membrane. It catalyses the reaction [GlcNAc-(1-&gt;4)-Mur2Ac(oyl-L-Ala-gamma-D-Glu-L-Lys-D-Ala-D-Ala)](n)-di-trans,octa-cis-undecaprenyl diphosphate + beta-D-GlcNAc-(1-&gt;4)-Mur2Ac(oyl-L-Ala-gamma-D-Glu-L-Lys-D-Ala-D-Ala)-di-trans,octa-cis-undecaprenyl diphosphate = [GlcNAc-(1-&gt;4)-Mur2Ac(oyl-L-Ala-gamma-D-Glu-L-Lys-D-Ala-D-Ala)](n+1)-di-trans,octa-cis-undecaprenyl diphosphate + di-trans,octa-cis-undecaprenyl diphosphate + H(+). Its pathway is cell wall biogenesis; peptidoglycan biosynthesis. In terms of biological role, peptidoglycan polymerase that is essential for cell division. The polypeptide is Probable peptidoglycan glycosyltransferase FtsW (Aliivibrio salmonicida (strain LFI1238) (Vibrio salmonicida (strain LFI1238))).